We begin with the raw amino-acid sequence, 28 residues long: Dolichyl-diphosphooligosaccharide--protein glycosyltransferase subunit 1 (28 aa).

The protein belongs to the OST1 family. In terms of assembly, component of the oligosaccharyltransferase (OST) complex.

The protein resides in the endoplasmic reticulum membrane. Its pathway is protein modification; protein glycosylation. Functionally, subunit of the oligosaccharyl transferase (OST) complex that catalyzes the initial transfer of a defined glycan (Glc(3)Man(9)GlcNAc(2) in eukaryotes) from the lipid carrier dolichol-pyrophosphate to an asparagine residue within an Asn-X-Ser/Thr consensus motif in nascent polypeptide chains, the first step in protein N-glycosylation. N-glycosylation occurs cotranslationally and the complex associates with the Sec61 complex at the channel-forming translocon complex that mediates protein translocation across the endoplasmic reticulum (ER). All subunits are required for a maximal enzyme activity. This Gallus gallus (Chicken) protein is Dolichyl-diphosphooligosaccharide--protein glycosyltransferase subunit 1.